Reading from the N-terminus, the 399-residue chain is MNPVEKARQKLKKKNAAKRNNLTKILNMESTPEAQSVDNISQSQNDLTKSLTTVPKPKSSISTKILKRKELTISDLIKLIFTCDVHEDDIYIVGGLSKSDFTIKKILYKNANVPKILYTNNYVYVHTDDHKIGELASERSKSRLMQTLSLVDINKYDQESQMILSSMKQACEIVRKKQIPLAQENIDTNVERILSGENSSASSVTSEECEQDVMDEQSAEDNEEVSQEIIDALNAVVAPVLENDMDSTESGDIGTELISMFAGQIMEYFSSPLAKENMPEDVLNEEMELLDELEAKVYKIMTASTNKVTKLLLQSAHNYYQGFSDNEKRNLLSRINDLLNPLIEYADKLIDNFCQLYGPADQPITAIGKVLNIAKKIVSVNGLNTNLKLKNGKFILNAE.

A compositionally biased stretch (polar residues) spans 197-206; that stretch reads ENSSASSVTS. Residues 197–224 form a disordered region; sequence ENSSASSVTSEECEQDVMDEQSAEDNEE. Residues 207-224 show a composition bias toward acidic residues; it reads EECEQDVMDEQSAEDNEE.

This is an uncharacterized protein from Diadromus pulchellus (Parasitic wasp).